Consider the following 338-residue polypeptide: Galaxin (338 aa).

Residues 1–23 form the signal peptide; sequence MKPSGAFLSLCVVLLSLATHCFS. The span at 30–47 shows a compositional bias: basic and acidic residues; sequence RRDAHSDTNALKSRDRRQ. Positions 30 to 50 are disordered; sequence RRDAHSDTNALKSRDRRQAPA.

Component of the acid-insoluble organic matrix of the aragonitic skeleton (at protein level). Initially, expressed in an aboral submarginal ring and then along calcifying septa.

The protein localises to the secreted. The sequence is that of Galaxin from Acropora millepora (Staghorn coral).